A 648-amino-acid chain; its full sequence is TBC1 domain family member 17 (648 aa).

The tract at residues 218 to 309 (DPYSTTFSSF…PELKNRIFSG (92 aa)) is required for interaction with OPTN. A disordered region spans residues 240 to 259 (PQPEGAASDLPPPPDDEPEP). Residues 310–520 (GLSPSLRREA…RLWEVLWTGL (211 aa)) enclose the Rab-GAP TBC domain. The segment at 594 to 648 (LAPPAEPHSPSPTASPLPLSPTRAPPTPPPSTDTAPQPDSSLEILPEEEDEGADS) is disordered. A compositionally biased stretch (pro residues) spans 597–624 (PAEPHSPSPTASPLPLSPTRAPPTPPPS). Ser-602 and Ser-604 each carry phosphoserine. Thr-606 is modified (phosphothreonine). Ser-608 carries the post-translational modification Phosphoserine. Phosphothreonine is present on Thr-615. Residues 625–634 (TDTAPQPDSS) are compositionally biased toward low complexity. The segment covering 638-648 (LPEEEDEGADS) has biased composition (acidic residues).

As to quaternary structure, interacts with OPTN; this interaction mediates TBC1D17 transient association with Rab8.

The protein localises to the cytoplasmic vesicle. It localises to the autophagosome. Its subcellular location is the cytoplasm. It is found in the recycling endosome. Its function is as follows. Probable RAB GTPase-activating protein that inhibits RAB8A/B function. Reduces Rab8 recruitment to tubules emanating from the endocytic recycling compartment (ERC) and inhibits Rab8-mediated endocytic trafficking, such as that of transferrin receptor (TfR). Involved in regulation of autophagy. The chain is TBC1 domain family member 17 from Homo sapiens (Human).